Reading from the N-terminus, the 256-residue chain is Triosephosphate isomerase (256 aa).

Position 12–14 (12–14) interacts with substrate; it reads NWK. H99 (electrophile) is an active-site residue. The active-site Proton acceptor is E171. Substrate-binding positions include G177, S217, and 238–239; that span reads GG.

This sequence belongs to the triosephosphate isomerase family. Homodimer.

The protein resides in the cytoplasm. It carries out the reaction D-glyceraldehyde 3-phosphate = dihydroxyacetone phosphate. It functions in the pathway carbohydrate biosynthesis; gluconeogenesis. Its pathway is carbohydrate degradation; glycolysis; D-glyceraldehyde 3-phosphate from glycerone phosphate: step 1/1. In terms of biological role, involved in the gluconeogenesis. Catalyzes stereospecifically the conversion of dihydroxyacetone phosphate (DHAP) to D-glyceraldehyde-3-phosphate (G3P). This is Triosephosphate isomerase from Rubrobacter xylanophilus (strain DSM 9941 / JCM 11954 / NBRC 16129 / PRD-1).